A 296-amino-acid polypeptide reads, in one-letter code: Sulfotransferase 1B1 (296 aa).

48 to 53 (KSGTTW) contributes to the 3'-phosphoadenylyl sulfate binding site. A substrate-binding site is contributed by 107–109 (KTH). H109 (proton acceptor) is an active-site residue. Residues R131, S139, Y194, 228-233 (TSFEMM), and 258-260 (RKG) contribute to the 3'-phosphoadenylyl sulfate site.

It belongs to the sulfotransferase 1 family. In terms of tissue distribution, expressed highly in the colon, kidney and small intestine of male and female dogs. Highly expressed in the jejunum and ileum of the male dog than the female dog, which displayed more expression in duodenum (at protein level).

It is found in the cytoplasm. It catalyses the reaction a phenol + 3'-phosphoadenylyl sulfate = an aryl sulfate + adenosine 3',5'-bisphosphate + H(+). The catalysed reaction is 3,3',5-triiodo-L-thyronine + 3'-phosphoadenylyl sulfate = 3,3',5-triiodo-L-thyronine sulfate + adenosine 3',5'-bisphosphate + H(+). The enzyme catalyses 3,3',5'-triiodo-L-thyronine + 3'-phosphoadenylyl sulfate = 3,3',5'-triiodo-L-thyronine sulfate + adenosine 3',5'-bisphosphate + H(+). It carries out the reaction 3,3'-diiodo-L-thyronine + 3'-phosphoadenylyl sulfate = 3,3'-diiodo-L-thyronine sulfate + adenosine 3',5'-bisphosphate + H(+). It catalyses the reaction 4-ethylphenol + 3'-phosphoadenylyl sulfate = 4-ethylphenyl sulfate + adenosine 3',5'-bisphosphate + H(+). Functionally, sulfotransferase that utilizes 3'-phospho-5'-adenylyl sulfate (PAPS) as sulfonate donor to catalyze the sulfate conjugation of dopamine, small phenols such as 1-naphthol and p-nitrophenol and thyroid hormones, including 3,3'-diiodothyronine, triidothyronine (T3) and reverse triiodothyronine (rT3). May play a role in gut microbiota-host metabolic interaction. O-sulfonates 4-ethylphenol (4-EP), a dietary tyrosine-derived metabolite produced by gut bacteria. The product 4-EPS crosses the blood-brain barrier and may negatively regulate oligodendrocyte maturation and myelination, affecting the functional connectivity of different brain regions associated with the limbic system. In Canis lupus familiaris (Dog), this protein is Sulfotransferase 1B1 (SULT1B1).